Reading from the N-terminus, the 454-residue chain is Laccase-3 (454 aa).

Plastocyanin-like domains lie at 1 to 95 and 101 to 252; these read PGPT…GPAT and DLGV…YSGA. N24 carries N-linked (GlcNAc...) asparagine glycosylation. H29, H31, H73, and H75 together coordinate Cu cation. N-linked (GlcNAc...) asparagine glycans are attached at residues N138, N169, N218, N314, and N334. The Plastocyanin-like 3 domain maps to 319–454; it reads DVDWKKPILQ…SEGLAVQFQG (136 aa). The Cu cation site is built by H375, H378, and H380. N395 is a glycosylation site (N-linked (GlcNAc...) asparagine). Cu cation-binding residues include H437, C438, H439, and H443.

This sequence belongs to the multicopper oxidase family. It depends on Cu cation as a cofactor.

It is found in the secreted. The enzyme catalyses 4 hydroquinone + O2 = 4 benzosemiquinone + 2 H2O. Its function is as follows. Lignin degradation and detoxification of lignin-derived products. In Botryotinia fuckeliana (Noble rot fungus), this protein is Laccase-3 (lcc3).